The following is a 369-amino-acid chain: uncharacterized protein (369 aa).

Helical transmembrane passes span 25–45 (QFVA…WYDW), 47–67 (FCLL…FVPA), 119–139 (LNIV…FNLM), 152–172 (LSGF…FSAL), 206–226 (HALN…LLFV), 235–255 (LKPL…SLYL), 272–292 (PIAL…GVFG), 296–316 (FGIY…TVFL), and 323–343 (LIFF…FTVA).

The protein to B.subtilis ComEC.

It is found in the cell membrane. This is an uncharacterized protein from Mycoplasma genitalium (strain ATCC 33530 / DSM 19775 / NCTC 10195 / G37) (Mycoplasmoides genitalium).